Consider the following 188-residue polypeptide: Auxin-induced protein 22C (188 aa).

The EAR-like (transcriptional repression) signature appears at 13–17; sequence LRLGL. The segment at 16-57 is disordered; sequence GLPGAGGENNTDKDKNKNKKRVFSDIEGENSSSEEDGKKETK. The PB1 domain occupies 79–167; it reads KLYVKVSMDG…KRLRIMKRSD (89 aa).

This sequence belongs to the Aux/IAA family. In terms of assembly, homodimers and heterodimers.

It is found in the nucleus. Functionally, aux/IAA proteins are short-lived transcriptional factors that function as repressors of early auxin response genes at low auxin concentrations. Repression is thought to result from the interaction with auxin response factors (ARFs), proteins that bind to the auxin-responsive promoter element (AuxRE). Formation of heterodimers with ARF proteins may alter their ability to modulate early auxin response genes expression. This chain is Auxin-induced protein 22C (AUX22C), found in Vigna radiata var. radiata (Mung bean).